The primary structure comprises 121 residues: Large ribosomal subunit protein bL20 (121 aa).

The protein belongs to the bacterial ribosomal protein bL20 family.

In terms of biological role, binds directly to 23S ribosomal RNA and is necessary for the in vitro assembly process of the 50S ribosomal subunit. It is not involved in the protein synthesizing functions of that subunit. The sequence is that of Large ribosomal subunit protein bL20 from Polynucleobacter necessarius subsp. necessarius (strain STIR1).